The following is a 308-amino-acid chain: Elongation factor Ts (308 aa).

The interval 80 to 83 (TDFV) is involved in Mg(2+) ion dislocation from EF-Tu.

This sequence belongs to the EF-Ts family.

It is found in the cytoplasm. Associates with the EF-Tu.GDP complex and induces the exchange of GDP to GTP. It remains bound to the aminoacyl-tRNA.EF-Tu.GTP complex up to the GTP hydrolysis stage on the ribosome. This Erythrobacter litoralis (strain HTCC2594) protein is Elongation factor Ts.